The primary structure comprises 300 residues: Glycine--tRNA ligase alpha subunit (300 aa).

This sequence belongs to the class-II aminoacyl-tRNA synthetase family. In terms of assembly, tetramer of two alpha and two beta subunits.

The protein resides in the cytoplasm. It catalyses the reaction tRNA(Gly) + glycine + ATP = glycyl-tRNA(Gly) + AMP + diphosphate. In Buchnera aphidicola subsp. Baizongia pistaciae (strain Bp), this protein is Glycine--tRNA ligase alpha subunit (glyQ).